Reading from the N-terminus, the 313-residue chain is Dehydrogenase/reductase SDR family member 1 (313 aa).

NAD(+) is bound at residue Ile19. Arg21 carries the post-translational modification Omega-N-methylarginine. NAD(+) is bound at residue Asp64. Ser151 is a substrate binding site. The NAD(+) site is built by Tyr163, Lys167, and Thr198. Tyr163 acts as the Proton acceptor in catalysis.

This sequence belongs to the short-chain dehydrogenases/reductases (SDR) family.

It localises to the endoplasmic reticulum. It carries out the reaction 17alpha-estradiol + NADP(+) = estrone + NADPH + H(+). It catalyses the reaction testosterone + NADP(+) = androst-4-ene-3,17-dione + NADPH + H(+). The catalysed reaction is prostaglandin E1 + NADPH + H(+) = prostaglandin F1 + NADP(+). The enzyme catalyses isatin + NADPH + H(+) = 3-hydroxyindolin-2-one + NADP(+). Its function is as follows. NADPH-dependent oxidoreductase which catalyzes the reduction of some steroids (estrone, androstene-3,17-dione and cortisone) as well as prostaglandin E1, isatin and xenobiotics in vitro. May have a role in steroid and/or xenobiotic metabolism. This chain is Dehydrogenase/reductase SDR family member 1, found in Mus musculus (Mouse).